Reading from the N-terminus, the 430-residue chain is Agropine synthesis reductase (430 aa).

Residue 203–227 (LISGPSRGIGKAIAENLIAHGYRMS) participates in NAD(+) binding. Serine 333 lines the substrate pocket. The active-site Proton acceptor is tyrosine 346.

This sequence belongs to the short-chain dehydrogenases/reductases (SDR) family.

It functions in the pathway opine metabolism; mannopine biosynthesis. In terms of biological role, reduces deoxy-fructosyl-glutamine to mannopine. The sequence is that of Agropine synthesis reductase (mas1) from Rhizobium rhizogenes (Agrobacterium rhizogenes).